We begin with the raw amino-acid sequence, 360 residues long: Decorin (360 aa).

Positions 1 to 16 (MKATIIFLLVAQVSWA) are cleaved as a signal peptide. Positions 17–30 (GPFQQKGLFDFMLE) are excised as a propeptide. An O-linked (Xyl...) (glycosaminoglycan) serine glycan is attached at serine 34. Cystine bridges form between cysteine 55–cysteine 61 and cysteine 59–cysteine 68. LRR repeat units follow at residues 74 to 94 (EKVP…NNKI), 95 to 118 (TEIK…NNKI), 119 to 142 (SKIS…KNQL), 143 to 163 (KELP…ENEI), 164 to 187 (TKVR…TNPL), 188 to 213 (KSSG…DTNI), 214 to 234 (TTIP…GNKI), 235 to 258 (TKVD…FNSI), 259 to 282 (SAVD…NNKL), 283 to 305 (VKVP…NNNI), 306 to 335 (SAIG…SNPV), and 336 to 360 (QYWE…GNYK). Residue asparagine 212 is glycosylated (N-linked (GlcNAc...) asparagine). 2 N-linked (GlcNAc...) asparagine glycosylation sites follow: asparagine 263 and asparagine 304. Cysteine 314 and cysteine 347 form a disulfide bridge.

It belongs to the small leucine-rich proteoglycan (SLRP) family. SLRP class I subfamily. As to quaternary structure, binds to type I and type II collagen, fibronectin and TGF-beta. Forms a ternary complex with MFAP2 and ELN. Interacts with DPT. Post-translationally, the attached glycosaminoglycan chain can be either chondroitin 4-sulfate, chondroitin 6-sulfate or dermatan sulfate, depending upon the tissue of origin.

It localises to the secreted. The protein resides in the extracellular space. Its subcellular location is the extracellular matrix. May affect the rate of fibrils formation. This Bos taurus (Bovine) protein is Decorin (DCN).